Consider the following 331-residue polypeptide: Ketol-acid reductoisomerase (NADP(+)) (331 aa).

The KARI N-terminal Rossmann domain maps to 2-182 (ARMYYDADAQ…GGTRAGILET (181 aa)). NADP(+) is bound by residues 25–28 (YGSQ), Ser-51, Ser-53, and 83–86 (DEVQ). His-108 is a catalytic residue. NADP(+) is bound at residue Gly-134. One can recognise a KARI C-terminal knotted domain in the interval 183–328 (TFREETETDL…QELRSMFSWL (146 aa)). Residues Asp-191, Glu-195, Glu-227, and Glu-231 each coordinate Mg(2+). Residue Ser-252 coordinates substrate.

This sequence belongs to the ketol-acid reductoisomerase family. It depends on Mg(2+) as a cofactor.

It carries out the reaction (2R)-2,3-dihydroxy-3-methylbutanoate + NADP(+) = (2S)-2-acetolactate + NADPH + H(+). The catalysed reaction is (2R,3R)-2,3-dihydroxy-3-methylpentanoate + NADP(+) = (S)-2-ethyl-2-hydroxy-3-oxobutanoate + NADPH + H(+). The protein operates within amino-acid biosynthesis; L-isoleucine biosynthesis; L-isoleucine from 2-oxobutanoate: step 2/4. It participates in amino-acid biosynthesis; L-valine biosynthesis; L-valine from pyruvate: step 2/4. Functionally, involved in the biosynthesis of branched-chain amino acids (BCAA). Catalyzes an alkyl-migration followed by a ketol-acid reduction of (S)-2-acetolactate (S2AL) to yield (R)-2,3-dihydroxy-isovalerate. In the isomerase reaction, S2AL is rearranged via a Mg-dependent methyl migration to produce 3-hydroxy-3-methyl-2-ketobutyrate (HMKB). In the reductase reaction, this 2-ketoacid undergoes a metal-dependent reduction by NADPH to yield (R)-2,3-dihydroxy-isovalerate. The chain is Ketol-acid reductoisomerase (NADP(+)) from Thermosynechococcus vestitus (strain NIES-2133 / IAM M-273 / BP-1).